Reading from the N-terminus, the 129-residue chain is Glycine cleavage system H protein (129 aa).

Residues 24–106 (LVRVGISAFA…HGEGWLLVLR (83 aa)) form the Lipoyl-binding domain. Residue K65 is modified to N6-lipoyllysine.

The protein belongs to the GcvH family. The glycine cleavage system is composed of four proteins: P, T, L and H. Requires (R)-lipoate as cofactor.

Its function is as follows. The glycine cleavage system catalyzes the degradation of glycine. The H protein shuttles the methylamine group of glycine from the P protein to the T protein. The chain is Glycine cleavage system H protein from Parasynechococcus marenigrum (strain WH8102).